A 158-amino-acid chain; its full sequence is MRRILSVLLENESGALSRVIGLFSQRGYNIETITVAPTEDPSLSKMTIQTIGNEKSIEQIEKQLHKLIDVLRVIKVGQNSHIEREIMLLKVQTNNCKKDDVKHITEVFRGQIVDITSTTYVLQITGTAKKLDSFLKIIRNTTEIIEMTRSGIVGIARG.

The ACT domain occupies 4-78 (ILSVLLENES…DVLRVIKVGQ (75 aa)).

This sequence belongs to the acetolactate synthase small subunit family. As to quaternary structure, dimer of large and small chains.

It catalyses the reaction 2 pyruvate + H(+) = (2S)-2-acetolactate + CO2. It functions in the pathway amino-acid biosynthesis; L-isoleucine biosynthesis; L-isoleucine from 2-oxobutanoate: step 1/4. Its pathway is amino-acid biosynthesis; L-valine biosynthesis; L-valine from pyruvate: step 1/4. This chain is Acetolactate synthase small subunit (ilvH), found in Buchnera aphidicola subsp. Schizaphis graminum (strain Sg).